The chain runs to 363 residues: MSIEINNISKYFGRTKVLNDITLDIPSGQMVALLGPSGSGKTTLLRIIAGLENQNAGRLSFHGTDVSRLHARDRRVGFVFQHYALFRHMTVFDNIAFGLTVLPRRERPNAAAIKQKVGQLLEMVQLGHLAERFPSQLSGGQKQRVALARALAVEPQILLLDEPFGALDAQVRKELRRWLRQLHEELKFTSVFVTHDQEEAMEVADRVVVMSQGNIEQVGTPDEVWREPATRFVLEFLGEVNRLSGEIRGSQLFIGAHHWPLDLAPMHQGSVDLFLRPWEMEVSTQSSDRCPLPVQVLEVSPRGHFWQLTVQPIGWHQDPISVVLPEGNIDAPVRGNRYYVGGLNARLYSGNQLLQPIALAQSA.

The 235-residue stretch at 3–237 folds into the ABC transporter domain; it reads IEINNISKYF…PATRFVLEFL (235 aa). 35-42 lines the ATP pocket; sequence GPSGSGKT.

Belongs to the ABC transporter superfamily. Sulfate/tungstate importer (TC 3.A.1.6) family. As to quaternary structure, the complex is composed of two ATP-binding proteins (CysA), two transmembrane proteins (CysT and CysW) and a solute-binding protein (CysP).

It localises to the cell inner membrane. The enzyme catalyses sulfate(out) + ATP + H2O = sulfate(in) + ADP + phosphate + H(+). It catalyses the reaction thiosulfate(out) + ATP + H2O = thiosulfate(in) + ADP + phosphate + H(+). Functionally, part of the ABC transporter complex CysAWTP involved in sulfate/thiosulfate import. Responsible for energy coupling to the transport system. The protein is Sulfate/thiosulfate import ATP-binding protein CysA of Yersinia pseudotuberculosis serotype I (strain IP32953).